Here is a 210-residue protein sequence, read N- to C-terminus: Amelogenin, X isoform (210 aa).

Residues 1–16 (MGTWILFACLLGAAFA) form the signal peptide. Serine 32 is modified (phosphoserine). Composition is skewed to low complexity over residues 109-119 (VAPQQPMMPVP) and 136-169 (PSAQ…HPMQ). Positions 109–187 (VAPQQPMMPV…PPLFSMQPLS (79 aa)) are disordered. Residues 170-179 (PLAPQPPLPP) are compositionally biased toward pro residues.

It belongs to the amelogenin family. Interacts with KRT5. Post-translationally, several forms are produced by C-terminal processing. In terms of processing, phosphorylated by FAM20C in vitro.

It localises to the secreted. Its subcellular location is the extracellular space. The protein localises to the extracellular matrix. In terms of biological role, plays a role in the biomineralization of teeth. Seems to regulate the formation of crystallites during the secretory stage of tooth enamel development. Thought to play a major role in the structural organization and mineralization of developing enamel. The sequence is that of Amelogenin, X isoform (Amelx) from Mus musculus (Mouse).